Here is a 281-residue protein sequence, read N- to C-terminus: Arylamine N-acetyltransferase (281 aa).

Residue Cys-69 is the Acyl-thioester intermediate of the active site. Catalysis depends on residues His-107 and Asp-122. N6-acetyllysine is present on residues Lys-214 and Lys-281.

Belongs to the arylamine N-acetyltransferase family. In terms of assembly, homodimer. In terms of processing, acetylated on Lys-214 and Lys-281. Deacetylated by CobB.

Its subcellular location is the cytoplasm. The catalysed reaction is an arylamine + acetyl-CoA = an N-acetylarylamine + CoA. The enzyme catalyses an N-hydroxyarylamine + acetyl-CoA = an N-acetoxyarylamine + CoA. Its activity is regulated as follows. Inhibited by salicylic acid, acetylsalicylic acid, 2,6-dichrolo-4-nitrophenol, N-ethylmaleimide and iodoacetamide. In terms of biological role, catalyzes the acetyl-CoA-dependent N-acetylation of aromatic amines, and, probably, the O-acetylation of N-hydroxyarylamines. In vitro, catalyzes the N-acetylation of various arylamines such as aminobenzoic acid, aminophenol, aminotoluene, phenetidine, anisidine, aniline, isoniazid and 2-amino-fluorene. N-hydroxyarylamine O-acetyltransferase activity has not been assayed directly, however, NhoA activity is required for the mutagenicity of nitroaromatic compounds, suggesting that it also has O-acetyltransferase activity. This chain is Arylamine N-acetyltransferase (nhoA), found in Escherichia coli (strain K12).